We begin with the raw amino-acid sequence, 202 residues long: MAHQCNDSSHSHGVDDGIEYSLNRYLDTGTITCLNEKVKGSVRHIFKSWEDRHDLKHFVESCDDEELIINIPFGAVTQIKSIIIIGGDGGSSPNKMKAYINNSNIDFGNINSFACTQEWNLHEDFEGQIGYSTKPTKFNNINHLTLYFPSNFGSPTTKIYFIALKGVYTSAKREIVNTVYESKPQLQDHKSDIFNGVSHDLS.

The PITH domain maps to 11–184; that stretch reads SHGVDDGIEY…IVNTVYESKP (174 aa).

Belongs to the PITHD1 family.

This Dictyostelium discoideum (Social amoeba) protein is PITH domain-containing protein 1.